Consider the following 377-residue polypeptide: Nitric oxide reductase FlRd-NAD(+) reductase (377 aa).

Belongs to the FAD-dependent oxidoreductase family. The cofactor is FAD.

The protein resides in the cytoplasm. It catalyses the reaction 2 reduced [nitric oxide reductase rubredoxin domain] + NAD(+) + H(+) = 2 oxidized [nitric oxide reductase rubredoxin domain] + NADH. The protein operates within nitrogen metabolism; nitric oxide reduction. In terms of biological role, one of at least two accessory proteins for anaerobic nitric oxide (NO) reductase. Reduces the rubredoxin moiety of NO reductase. The polypeptide is Nitric oxide reductase FlRd-NAD(+) reductase (Salmonella agona (strain SL483)).